A 380-amino-acid polypeptide reads, in one-letter code: Cystathionine gamma-synthase (380 aa).

Residue K195 is modified to N6-(pyridoxal phosphate)lysine.

It belongs to the trans-sulfuration enzymes family. In terms of assembly, homotetramer. Requires pyridoxal 5'-phosphate as cofactor.

The protein resides in the cytoplasm. The catalysed reaction is O-succinyl-L-homoserine + L-cysteine = L,L-cystathionine + succinate + H(+). Functionally, catalyzes the formation of L-cystathionine from O-succinyl-L-homoserine (OSHS) and L-cysteine, via a gamma-replacement reaction. In the absence of thiol, catalyzes gamma-elimination to form 2-oxobutanoate, succinate and ammonia. This chain is Cystathionine gamma-synthase (metB), found in Helicobacter pylori (strain ATCC 700392 / 26695) (Campylobacter pylori).